The primary structure comprises 187 residues: UPF0340 protein SPD_0576 (187 aa).

The protein belongs to the UPF0340 family.

In Streptococcus pneumoniae serotype 2 (strain D39 / NCTC 7466), this protein is UPF0340 protein SPD_0576.